A 445-amino-acid chain; its full sequence is Plasmid recombination enzyme (445 aa).

Tyr-45 and Tyr-113 together coordinate DNA.

The protein belongs to the plasmid mobilization pre family.

This is Plasmid recombination enzyme from Bacillus thuringiensis.